We begin with the raw amino-acid sequence, 133 residues long: MAVEKVYQPYDEQVYNSIPKQQPQTKPEKKTVSRKVVVQLTKFEKVLYITLITVIAMLSIYMLSLKMDAYDTRGKIADLDYKIDKQSSENSALQSEIKKNSSYERIYEKAKKQGMSLENDNVKVVRSNGEAKN.

Over 1–45 (MAVEKVYQPYDEQVYNSIPKQQPQTKPEKKTVSRKVVVQLTKFEK) the chain is Cytoplasmic. A helical membrane pass occupies residues 46-65 (VLYITLITVIAMLSIYMLSL). The Extracellular segment spans residues 66–133 (KMDAYDTRGK…VVRSNGEAKN (68 aa)).

The protein belongs to the FtsL family.

It is found in the cell membrane. Its function is as follows. Essential cell division protein. This chain is Cell division protein FtsL, found in Staphylococcus aureus (strain NCTC 8325 / PS 47).